We begin with the raw amino-acid sequence, 417 residues long: Glutamate-1-semialdehyde 2,1-aminomutase (417 aa).

Position 263 is an N6-(pyridoxal phosphate)lysine (K263).

Belongs to the class-III pyridoxal-phosphate-dependent aminotransferase family. HemL subfamily. Pyridoxal 5'-phosphate is required as a cofactor.

Its subcellular location is the cytoplasm. The catalysed reaction is (S)-4-amino-5-oxopentanoate = 5-aminolevulinate. The protein operates within porphyrin-containing compound metabolism; protoporphyrin-IX biosynthesis; 5-aminolevulinate from L-glutamyl-tRNA(Glu): step 2/2. This Methanospirillum hungatei JF-1 (strain ATCC 27890 / DSM 864 / NBRC 100397 / JF-1) protein is Glutamate-1-semialdehyde 2,1-aminomutase.